The following is a 382-amino-acid chain: Apolipoprotein A-IV (382 aa).

Residues M1–A20 form the signal peptide. A run of 13 repeats spans residues D33–L54, A60–V81, P82–R103, P115–G136, P137–T158, A159–T180, P181–T202, P203–A224, P225–K246, K247–V268, P269–Q286, K287–G308, and P309–G330. The interval D33–G330 is 13 X 22 AA approximate tandem repeats.

It belongs to the apolipoprotein A1/A4/E family. In terms of assembly, homodimer. Phosphorylation sites are present in the extracellular medium.

The protein resides in the secreted. May have a role in chylomicrons and VLDL secretion and catabolism. Required for efficient activation of lipoprotein lipase by ApoC-II; potent activator of LCAT. Apoa-IV is a major component of HDL and chylomicrons. This Neomonachus schauinslandi (Hawaiian monk seal) protein is Apolipoprotein A-IV (APOA4).